Reading from the N-terminus, the 359-residue chain is Protein HEXIM1 (359 aa).

The interval 1–163 (MAEPFLSEYQ…RRRPSKKKRH (163 aa)) is disordered. Residues 9–19 (YQHQPQTSNCT) are compositionally biased toward polar residues. Basic and acidic residues-rich tracts occupy residues 34–47 (PGAE…DSRW) and 84–93 (CLREGEKGQN). 2 positions are modified to phosphoserine: Ser97 and Ser98. A compositionally biased stretch (basic residues) spans 148–163 (LGKKKHRRRPSKKKRH). The interval 150–177 (KKKHRRRPSKKKRHWKPYYKLTWEEKKK) is basic region; mediates nuclear localization and interaction with 7SK snRNA and NR3C1. An interaction with P-TEFb region spans residues 202–205 (PYNT). Residues 210 to 250 (MDDHDQEEPDLKTGLYSKRAAAKSDDTSDDDFMEEGGEEDG) are autoinhibitory acidic region; in absence of 7SK snRNA interacts with the basic region preventing interaction with P-TEFb and modulating subcellular localization. The tract at residues 213–262 (HDQEEPDLKTGLYSKRAAAKSDDTSDDDFMEEGGEEDGGSDGMGGDGSEF) is disordered. Residue Ser233 is modified to Phosphoserine. Phosphothreonine is present on Thr236. Residues 236–251 (TSDDDFMEEGGEEDGG) show a composition bias toward acidic residues. Ser237, Ser252, and Ser260 each carry phosphoserine. Residues 283 to 349 (SKQELIKEYL…LTENELHRQQ (67 aa)) are a coiled coil. A mediates interaction with CCNT1 region spans residues 286–314 (ELIKEYLELEKCLSRMEDENNRLRLESKR). The segment at 310–355 (LESKRLGGDDARVRELELELDRLRAENLQLLTENELHRQQERAPLS) is required for inhibition of ESR1-dependent transcription.

The protein belongs to the HEXIM family. As to quaternary structure, homooligomer and heterooligomer with HEXIM2; probably dimeric. Core component of the 7SK RNP complex, at least composed of 7SK RNA, LARP7, MEPCE, HEXIM1 (or HEXIM2) and P-TEFb (composed of CDK9 and CCNT1/cyclin-T1). Interacts with the N-CoR complex through NCOR1. Interacts with ESR1 and NR3C1. May interact with NF-kappa-B through RELA. Interacts with CCNT2; mediates formation of a tripartite complex with KPNA2. Part of the HDP-RNP complex composed of at least HEXIM1, PRKDC, XRCC5, XRCC6, paraspeckle proteins (SFPQ, NONO, PSPC1, RBM14, and MATR3) and NEAT1 non-coding RNA. In terms of tissue distribution, ubiquitously expressed with higher expression in placenta. HEXIM1 and HEXIM2 are differentially expressed. Expressed in endocrine tissues.

It localises to the nucleus. It is found in the cytoplasm. In terms of biological role, transcriptional regulator which functions as a general RNA polymerase II transcription inhibitor. Core component of the 7SK RNP complex: in cooperation with 7SK snRNA sequesters P-TEFb in a large inactive 7SK snRNP complex preventing RNA polymerase II phosphorylation and subsequent transcriptional elongation. May also regulate NF-kappa-B, ESR1, NR3C1 and CIITA-dependent transcriptional activity. Plays a role in the regulation of DNA virus-mediated innate immune response by assembling into the HDP-RNP complex, a complex that serves as a platform for IRF3 phosphorylation and subsequent innate immune response activation through the cGAS-STING pathway. The chain is Protein HEXIM1 (HEXIM1) from Homo sapiens (Human).